Reading from the N-terminus, the 81-residue chain is Cytochrome c oxidase subunit 7B2, mitochondrial (81 aa).

Residues Met1–Gln25 constitute a mitochondrion transit peptide. Topologically, residues Ser26–Asp33 are mitochondrial matrix. A helical membrane pass occupies residues Phe34–Gln60. Residues Ile61 to Gln81 are Mitochondrial intermembrane-facing.

The protein belongs to the cytochrome c oxidase VIIb family. In terms of assembly, component of the cytochrome c oxidase (complex IV, CIV), a multisubunit enzyme composed of 14 subunits. The complex is composed of a catalytic core of 3 subunits MT-CO1, MT-CO2 and MT-CO3, encoded in the mitochondrial DNA, and 11 supernumerary subunits COX4I, COX5A, COX5B, COX6A, COX6B, COX6C, COX7A, COX7B, COX7C, COX8 and NDUFA4, which are encoded in the nuclear genome. The complex exists as a monomer or a dimer and forms supercomplexes (SCs) in the inner mitochondrial membrane with NADH-ubiquinone oxidoreductase (complex I, CI) and ubiquinol-cytochrome c oxidoreductase (cytochrome b-c1 complex, complex III, CIII), resulting in different assemblies (supercomplex SCI(1)III(2)IV(1) and megacomplex MCI(2)III(2)IV(2)).

The protein resides in the mitochondrion inner membrane. Its pathway is energy metabolism; oxidative phosphorylation. Its function is as follows. Component of the cytochrome c oxidase, the last enzyme in the mitochondrial electron transport chain which drives oxidative phosphorylation. The respiratory chain contains 3 multisubunit complexes succinate dehydrogenase (complex II, CII), ubiquinol-cytochrome c oxidoreductase (cytochrome b-c1 complex, complex III, CIII) and cytochrome c oxidase (complex IV, CIV), that cooperate to transfer electrons derived from NADH and succinate to molecular oxygen, creating an electrochemical gradient over the inner membrane that drives transmembrane transport and the ATP synthase. Cytochrome c oxidase is the component of the respiratory chain that catalyzes the reduction of oxygen to water. Electrons originating from reduced cytochrome c in the intermembrane space (IMS) are transferred via the dinuclear copper A center (CU(A)) of subunit 2 and heme A of subunit 1 to the active site in subunit 1, a binuclear center (BNC) formed by heme A3 and copper B (CU(B)). The BNC reduces molecular oxygen to 2 water molecules using 4 electrons from cytochrome c in the IMS and 4 protons from the mitochondrial matrix. This is Cytochrome c oxidase subunit 7B2, mitochondrial (COX7B2) from Macaca fascicularis (Crab-eating macaque).